Here is a 471-residue protein sequence, read N- to C-terminus: UDP-N-acetylmuramate--L-alanine ligase (471 aa).

An ATP-binding site is contributed by G112–T118.

Belongs to the MurCDEF family.

The protein localises to the cytoplasm. It catalyses the reaction UDP-N-acetyl-alpha-D-muramate + L-alanine + ATP = UDP-N-acetyl-alpha-D-muramoyl-L-alanine + ADP + phosphate + H(+). It participates in cell wall biogenesis; peptidoglycan biosynthesis. Functionally, cell wall formation. This is UDP-N-acetylmuramate--L-alanine ligase from Cupriavidus metallidurans (strain ATCC 43123 / DSM 2839 / NBRC 102507 / CH34) (Ralstonia metallidurans).